The primary structure comprises 361 residues: Serine/threonine-protein kinase SRK2I (361 aa).

The 257-residue stretch at 22–278 (YDFVKDIGSG…IPEIKTHSWF (257 aa)) folds into the Protein kinase domain. Residues 28–36 (IGSGNFGVA) and K51 contribute to the ATP site. D141 serves as the catalytic Proton acceptor.

The protein belongs to the protein kinase superfamily. Ser/Thr protein kinase family. As to quaternary structure, interacts with ABI1. Interacts with I-2 and TOPP1. Interacts with FREE1 (via C-terminus). Autophosphorylated in vitro. As to expression, expressed at low levels in seeds, seedlings, roots (especially in tips), stems, leaves, shoots, flowers and siliques.

It catalyses the reaction L-seryl-[protein] + ATP = O-phospho-L-seryl-[protein] + ADP + H(+). The enzyme catalyses L-threonyl-[protein] + ATP = O-phospho-L-threonyl-[protein] + ADP + H(+). With respect to regulation, activated by autophosphorylation of its activation loop. Functionally, together with SRK2D, key component and activator of the abscisic acid (ABA) signaling pathway that regulates numerous ABA responses, such as seed germination, Pro accumulation, root growth inhibition, dormancy and seedling growth, and, to a lesser extent, stomatal closure. In response to ABA, phosphorylates the ESCRT-I complex component FREE1, which is required for ABA-induced FREE1 nuclear import. The sequence is that of Serine/threonine-protein kinase SRK2I (SRK2I) from Arabidopsis thaliana (Mouse-ear cress).